The following is a 20-amino-acid chain: Short cationic peptide-3a (20 aa).

E20 carries the glutamic acid 1-amide modification.

Expressed by the venom gland.

It localises to the secreted. This is Short cationic peptide-3a from Cupiennius salei (American wandering spider).